A 323-amino-acid chain; its full sequence is tRNA dimethylallyltransferase (323 aa).

15–22 (GATGSGKT) contributes to the ATP binding site. Residue 17–22 (TGSGKT) coordinates substrate. 2 interaction with substrate tRNA regions span residues 40–43 (DSRQ) and 164–168 (QRLIR).

It belongs to the IPP transferase family. In terms of assembly, monomer. Requires Mg(2+) as cofactor.

The enzyme catalyses adenosine(37) in tRNA + dimethylallyl diphosphate = N(6)-dimethylallyladenosine(37) in tRNA + diphosphate. Its function is as follows. Catalyzes the transfer of a dimethylallyl group onto the adenine at position 37 in tRNAs that read codons beginning with uridine, leading to the formation of N6-(dimethylallyl)adenosine (i(6)A). The chain is tRNA dimethylallyltransferase from Chloroherpeton thalassium (strain ATCC 35110 / GB-78).